The following is a 74-amino-acid chain: U-actitoxin-Bgr3a (74 aa).

A signal peptide spans 1–21 (MSAQRFLFLLVVTSLIAASLA). The propeptide occupies 22–29 (APKDVQLT). 3 cysteine pairs are disulfide-bonded: C35-C68, C37-C61, and C51-C69.

The protein belongs to the sea anemone type 3 (BDS) potassium channel toxin family.

It localises to the secreted. The protein resides in the nematocyst. Functionally, potently and selectively inhibits voltage-gated potassium channels Kv11/KCNH/ERG. Acts as a gating-modifier toxin that shifts the voltage-dependence of ERG activation in the positive direction and suppresses its current amplitudes elicited by strong depolarizing pulses that maximally activate the channels. This chain is U-actitoxin-Bgr3a, found in Bunodosoma granuliferum (Red warty sea anemone).